The primary structure comprises 406 residues: COP9 signalosome complex subunit 4 (406 aa).

A2 is modified (N-acetylalanine). K25 is modified (N6-acetyllysine). Residues 197–366 (YRRKFIEAAQ…GIVHFETREA (170 aa)) enclose the PCI domain.

This sequence belongs to the CSN4 family. In terms of assembly, component of the CSN complex, composed of COPS1/GPS1, COPS2, COPS3, COPS4, COPS5, COPS6, COPS7 (COPS7A or COPS7B), COPS8 and COPS9 isoform 1. In the complex, it probably interacts directly with COPS1, COPS2, COPS3, COPS5, COPS6, COPS7 (COPS7A or COPS7B) and COPS8. Interacts with TOR1A; the interaction is direct and associates TOR1A and SNAPIN with the CSN complex. Interacts with STON2; controls STON2 neddylation levels. Interacts with ERCC6.

The protein resides in the cytoplasm. It is found in the nucleus. It localises to the cytoplasmic vesicle. The protein localises to the secretory vesicle. Its subcellular location is the synaptic vesicle. Component of the COP9 signalosome complex (CSN), a complex involved in various cellular and developmental processes. The CSN complex is an essential regulator of the ubiquitin (Ubl) conjugation pathway by mediating the deneddylation of the cullin subunits of SCF-type E3 ligase complexes, leading to decrease the Ubl ligase activity of SCF-type complexes such as SCF, CSA or DDB2. Also involved in the deneddylation of non-cullin subunits such as STON2. The complex is also involved in phosphorylation of p53/TP53, c-jun/JUN, IkappaBalpha/NFKBIA, ITPK1, IRF8/ICSBP and SNAPIN, possibly via its association with CK2 and PKD kinases. CSN-dependent phosphorylation of TP53 and JUN promotes and protects degradation by the Ubl system, respectively. The chain is COP9 signalosome complex subunit 4 (COPS4) from Homo sapiens (Human).